The primary structure comprises 539 residues: GMP synthase [glutamine-hydrolyzing] (539 aa).

One can recognise a Glutamine amidotransferase type-1 domain in the interval 4-202 (KILILDFGSQ…VLDIAGAKPD (199 aa)). The active-site Nucleophile is the Cys81. Residues His176 and Glu178 contribute to the active site. The GMPS ATP-PPase domain maps to 203–395 (WIMRDHIEEA…LGLPAEMVYR (193 aa)). 230–236 (SGGVDSS) provides a ligand contact to ATP.

As to quaternary structure, homodimer.

It carries out the reaction XMP + L-glutamine + ATP + H2O = GMP + L-glutamate + AMP + diphosphate + 2 H(+). Its pathway is purine metabolism; GMP biosynthesis; GMP from XMP (L-Gln route): step 1/1. Its function is as follows. Catalyzes the synthesis of GMP from XMP. This is GMP synthase [glutamine-hydrolyzing] from Burkholderia pseudomallei (strain 1106a).